Consider the following 204-residue polypeptide: MNVIDLLILDNEKYKKQFRKNKLFKIKFDSTLRKNKFLKHFRIWSDEFQKMVLARVVFSETKEFKQLAWDHLTDEFGHNIELSQNLENDKETTDSIFEALGSWFTLKMMTLGDSERAVLVHLVIESCATIFYEKLGSIFCNHKASQHFKTHMHLDPEHEQMGINLLKQININDFSLLIIQKKGWDMIDALFTRLAEITTIPDNF.

This is an uncharacterized protein from Rickettsia prowazekii (strain Madrid E).